The chain runs to 380 residues: Growth-regulating factor 4 (380 aa).

The disordered stretch occupies residues 1 to 21 (MDLQLKQWRSQQQNESEEQGS). The region spanning 82 to 117 (FFSWAQWQELELQALIYRYMLAGASVPQELLLPIKK) is the QLQ domain. Positions 151-195 (DPEPGRCKRTDGKKWRCSRDVVAGHKYCDRHIHRGRNRSRKPVET) constitute a WRC domain. 2 consecutive short sequence motifs (bipartite nuclear localization signal) follow at residues 156–166 (RCKRTDGKKWR) and 184–191 (RGRNRSRK). Disordered stretches follow at residues 222–270 (NNNH…GRSD) and 284–330 (RSSD…NMRN). Composition is skewed to low complexity over residues 228–245 (SSGS…SCSS) and 285–296 (SSDSTSSPMSSS). Positions 297 to 320 (TCHLSISMPGNNTSSDVSLKLSTG) are enriched in polar residues.

The protein belongs to the GRF family. In terms of tissue distribution, strongly expressed in actively growing and developing tissues, such as roots, upper stems, and shoot tips containing the shoot apical meristem (SAM) and flower buds. Also expressed in mature flowers, but weakly expressed in mature stems and leaves.

The protein resides in the nucleus. Its function is as follows. Transcription activator that plays a role in the regulation of cell expansion in leaf and cotyledons tissues. Component of a network formed by miR396, the GRFs and their interacting factors (GIFs) acting in the regulation of meristem function, at least partially through the control of cell proliferation. The protein is Growth-regulating factor 4 (GRF4) of Arabidopsis thaliana (Mouse-ear cress).